Reading from the N-terminus, the 205-residue chain is Nuclear transcription factor Y subunit beta (205 aa).

The segment at 1–50 (MDGDSSTTDASQLGIAGDYIGGSHYVIQPHDDTEDSMNDHEDTNGSKESF) is a domain. The tract at residues 24 to 50 (HYVIQPHDDTEDSMNDHEDTNGSKESF) is disordered. A compositionally biased stretch (basic and acidic residues) spans 37 to 50 (MNDHEDTNGSKESF). Residues 51 to 140 (REQDIYLPIA…PLKLYLQKFR (90 aa)) form a b domain region. The DNA-binding element occupies 57–63 (LPIANVA). Positions 84-95 (VQECVSEFISFI) are subunit association domain (SAD). The c domain stretch occupies residues 141–201 (EAMKGEKGIG…SYQQISGVQQ (61 aa)).

This sequence belongs to the NFYB/HAP3 subunit family. As to quaternary structure, heterotrimeric transcription factor composed of three components, NF-YA, NF-YB and NF-YC. NF-YB and NF-YC must interact and dimerize for NF-YA association and DNA binding.

It localises to the nucleus. Its function is as follows. Component of the sequence-specific heterotrimeric transcription factor (NF-Y) which specifically recognizes a 5'-CCAAT-3' box motif found in the promoters of its target genes. NF-Y can function as both an activator and a repressor, depending on its interacting cofactors. This Gallus gallus (Chicken) protein is Nuclear transcription factor Y subunit beta (NFYB).